Consider the following 219-residue polypeptide: MLKLTTTSVTFHVLRYFQLGLSVTNLLLASFAIITNYKVDRILRLSLAVSIISSVYFGIVRFLPVLLIFVMEIVQTVLWFTAFVTLASKFGSMSCSSMPRGINFDYSGSCKIAKIDILPEAVLFILFLATTYASYITVLSQAKENGSSTRSVLKACVKALRDTVDRLETSLEESEPLLDLEVQEDARTETESIEDSTDSEDNANIEQEKVIDGSIEHSS.

The Cytoplasmic portion of the chain corresponds to 1–15 (MLKLTTTSVTFHVLR). The helical transmembrane segment at 16–36 (YFQLGLSVTNLLLASFAIITN) threads the bilayer. The Vacuolar portion of the chain corresponds to 37-41 (YKVDR). The helical transmembrane segment at 42–62 (ILRLSLAVSIISSVYFGIVRF) threads the bilayer. A topological domain (cytoplasmic) is located at residue Leu-63. The chain crosses the membrane as a helical span at residues 64-84 (PVLLIFVMEIVQTVLWFTAFV). At 85–116 (TLASKFGSMSCSSMPRGINFDYSGSCKIAKID) the chain is on the vacuolar side. The helical transmembrane segment at 117–137 (ILPEAVLFILFLATTYASYIT) threads the bilayer. Residues 138-219 (VLSQAKENGS…VIDGSIEHSS (82 aa)) lie on the Cytoplasmic side of the membrane. Residues 176 to 219 (PLLDLEVQEDARTETESIEDSTDSEDNANIEQEKVIDGSIEHSS) are disordered. Acidic residues predominate over residues 191 to 203 (ESIEDSTDSEDNA). A compositionally biased stretch (basic and acidic residues) spans 206-219 (EQEKVIDGSIEHSS).

Its subcellular location is the vacuole membrane. This is an uncharacterized protein from Saccharomyces cerevisiae (strain ATCC 204508 / S288c) (Baker's yeast).